The following is a 1025-amino-acid chain: Multidrug resistance protein MdtC (1025 aa).

The next 12 membrane-spanning stretches (helical) occupy residues 15–35, 333–353, 360–380, 387–407, 431–451, 469–489, 528–548, 851–871, 875–895, 897–917, 953–973, and 984–1004; these read ILIS…LPVA, EVEQ…FLFL, LIPA…MYLC, LSLM…IVVL, VGFT…PLLL, VAIG…CGWL, LTGL…ISIP, AQVI…GMLY, VHPL…LLAL, IFDA…IGIV, PIMM…LSGG, and ITIV…TPVV.

Belongs to the resistance-nodulation-cell division (RND) (TC 2.A.6) family. MdtC subfamily. As to quaternary structure, part of a tripartite efflux system composed of MdtA, MdtB and MdtC. MdtC forms a heteromultimer with MdtB.

The protein resides in the cell inner membrane. The sequence is that of Multidrug resistance protein MdtC from Klebsiella pneumoniae (strain 342).